Reading from the N-terminus, the 442-residue chain is Protein IQ-DOMAIN 33 (442 aa).

Residues 159–188 (EEDAAVIIQSAFRSYLAIRRSKEEEETFAK) enclose the IQ domain. Residues 184 to 212 (ETFAKEESFSGEESQDNASMGTSLEAQTG) form a disordered region. Residues 199-212 (DNASMGTSLEAQTG) show a composition bias toward polar residues. Residues 270–282 (RERALAYAFSQQL) form a calmodulin-binding region. Positions 375–442 (EKSSFKPSIS…ETSHKLNSST (68 aa)) are disordered. The span at 383–402 (ISKRKSVPSYKSQRKHHKLQ) shows a compositional bias: basic residues. Positions 385 to 392 (KRKSVPSY) match the Nuclear localization signal motif.

This sequence belongs to the IQD family. In terms of assembly, binds to multiple calmodulin (CaM) in the presence of Ca(2+) and CaM-like proteins.

Its subcellular location is the nucleus. In terms of biological role, may be involved in cooperative interactions with calmodulins or calmodulin-like proteins. Recruits calmodulin proteins to microtubules, thus being a potential scaffold in cellular signaling and trafficking. May associate with nucleic acids and regulate gene expression at the transcriptional or post-transcriptional level. The chain is Protein IQ-DOMAIN 33 from Arabidopsis thaliana (Mouse-ear cress).